Here is a 439-residue protein sequence, read N- to C-terminus: Serine hydroxymethyltransferase (439 aa).

127–129 contributes to the (6S)-5,6,7,8-tetrahydrofolate binding site; sequence AHV. Lys-233 is subject to N6-(pyridoxal phosphate)lysine.

It belongs to the SHMT family. In terms of assembly, homodimer. The cofactor is pyridoxal 5'-phosphate.

It localises to the cytoplasm. It participates in amino-acid biosynthesis; glycine biosynthesis; glycine from L-serine: step 1/1. In terms of biological role, catalyzes the reversible interconversion of serine and glycine with a modified folate serving as the one-carbon carrier. Also exhibits a pteridine-independent aldolase activity toward beta-hydroxyamino acids, producing glycine and aldehydes, via a retro-aldol mechanism. The sequence is that of Serine hydroxymethyltransferase from Aeropyrum pernix (strain ATCC 700893 / DSM 11879 / JCM 9820 / NBRC 100138 / K1).